We begin with the raw amino-acid sequence, 307 residues long: tRNA dimethylallyltransferase (307 aa).

9 to 16 (GPTAVGKT) is an ATP binding site. 11 to 16 (TAVGKT) contributes to the substrate binding site. An interaction with substrate tRNA region spans residues 34 to 37 (DSMQ).

This sequence belongs to the IPP transferase family. As to quaternary structure, monomer. It depends on Mg(2+) as a cofactor.

The catalysed reaction is adenosine(37) in tRNA + dimethylallyl diphosphate = N(6)-dimethylallyladenosine(37) in tRNA + diphosphate. Catalyzes the transfer of a dimethylallyl group onto the adenine at position 37 in tRNAs that read codons beginning with uridine, leading to the formation of N6-(dimethylallyl)adenosine (i(6)A). The protein is tRNA dimethylallyltransferase of Limosilactobacillus fermentum (strain NBRC 3956 / LMG 18251) (Lactobacillus fermentum).